Consider the following 693-residue polypeptide: MWPQPYLPPHPMMLEESRQNKLAAAKKKLKEYQQRKSPGIPAGAKTKKKKTDSSPETTTSGGGHSPGDSQYQELAVALESSSVTINQLNENIESLKQQKKQVEHQLEEAKKTNNEIHKAQMEQLETINILTLEKADLKTTLYHTKRAARHFEEESKDLAGRLQYSLQHIQELERALCAVSTQQQEEDRSSSCREAVLQRRLQQTIKERALLNAHVTQVTESLKQVQLERDEYAKHIKGERARWQERMWKMSVEARTLKEEKKRDIHRIQELERSLSELKNQMAEPPSLAPPAVTSVVEQLQDEAKHLRQEVEGLEGKLQSQVENNQALSLLSKEQKQRLQEQEEMLREQEAQRVREQERLCEQNERLREQQKTLQEQGERLRKQEQRLRKQEERLRKEEERLQKQEKRLWDQEERLWKKEERLQKQEERLALSQNHKLDKQLAEPQCSFEDLNNEKKSALQLEQQVKELQEKLDEEHLEAASQRNQQLETQLSLVALPGEGDGGQHLDSEEEEAPRPTPNIPEDLESREATSSFMDLPKEKADGTEQVERRELGFVQPSGVTDGMRESFTVYESQGAVPNTRHQEMEDVIRLAQKEEEMKVKLLELQELVLPLVGNHEGHGKFLIAAQNPADEPTPGAPAPQELGAAGEQDVFYEVSLDNNVEPAPGVAREGSPHNNPTVQQIVQLSPVMQDT.

Residues 14 to 611 (LEESRQNKLA…KLLELQELVL (598 aa)) adopt a coiled-coil conformation. 3 disordered regions span residues 20–70 (NKLA…GDSQ), 497–547 (LPGE…GTEQ), and 662–693 (VEPAPGVAREGSPHNNPTVQQIVQLSPVMQDT). Basic and acidic residues predominate over residues 537–547 (LPKEKADGTEQ). Residues 674 to 693 (PHNNPTVQQIVQLSPVMQDT) show a composition bias toward polar residues.

It belongs to the GOLGA6 family.

The polypeptide is Golgin subfamily A member 6D (GOLGA6D) (Homo sapiens (Human)).